We begin with the raw amino-acid sequence, 151 residues long: D-aminoacyl-tRNA deacylase (151 aa).

Residues 137–138 (GP) carry the Gly-cisPro motif, important for rejection of L-amino acids motif.

The protein belongs to the DTD family. In terms of assembly, homodimer.

It is found in the cytoplasm. It carries out the reaction glycyl-tRNA(Ala) + H2O = tRNA(Ala) + glycine + H(+). The enzyme catalyses a D-aminoacyl-tRNA + H2O = a tRNA + a D-alpha-amino acid + H(+). An aminoacyl-tRNA editing enzyme that deacylates mischarged D-aminoacyl-tRNAs. Also deacylates mischarged glycyl-tRNA(Ala), protecting cells against glycine mischarging by AlaRS. Acts via tRNA-based rather than protein-based catalysis; rejects L-amino acids rather than detecting D-amino acids in the active site. By recycling D-aminoacyl-tRNA to D-amino acids and free tRNA molecules, this enzyme counteracts the toxicity associated with the formation of D-aminoacyl-tRNA entities in vivo and helps enforce protein L-homochirality. In Acaryochloris marina (strain MBIC 11017), this protein is D-aminoacyl-tRNA deacylase.